A 241-amino-acid polypeptide reads, in one-letter code: Bidirectional sugar transporter SWEET17 (241 aa).

Residues 1-3 (MAE) are Vacuolar-facing. Residues 4–24 (ASFYIGVIGNVISVLVFLSPV) form a helical membrane-spanning segment. Positions 6–92 (FYIGVIGNVI…SLFLFYAPRH (87 aa)) constitute a MtN3/slv 1 domain. The Cytoplasmic segment spans residues 25 to 41 (ETFWKIVKRRSTEEYKS). The chain crosses the membrane as a helical span at residues 42–62 (LPYICTLLGSSLWTYYGIVTP). The Vacuolar portion of the chain corresponds to 63-69 (GEYLVST). The helical transmembrane segment at 70–90 (VNGFGALVETIYVSLFLFYAP) threads the bilayer. The Cytoplasmic portion of the chain corresponds to 91–94 (RHLK). Residues 95–115 (LKTVDVDAMLNVFFPIAAIVA) traverse the membrane as a helical segment. Topologically, residues 116-128 (TRSAFEDEKMRSQ) are vacuolar. A helical membrane pass occupies residues 129–149 (SIGFISAGLNIIMYGSPLSAM). Residues 129–212 (SIGFISAGLN…LILYGIYRNA (84 aa)) enclose the MtN3/slv 2 domain. Residues 150–161 (KTVVTTKSVKYM) are Cytoplasmic-facing. The helical transmembrane segment at 162–182 (PFWLSFFLFLNGAIWAVYALL) threads the bilayer. Residues 183–185 (QHD) lie on the Vacuolar side of the membrane. The helical transmembrane segment at 186 to 206 (VFLLVPNGVGFVFGTMQLILY) threads the bilayer. Residues 207–241 (GIYRNAKPVGLSNGLSEIAQDEEEGLTSRVEPLLS) lie on the Cytoplasmic side of the membrane.

This sequence belongs to the SWEET sugar transporter family. As to quaternary structure, forms homooligomers and heterooligomers with SWEET1, SWEET2, SWEET3, SWEET4, SWEET6, SWEET7, SWEET8, SWEET9, SWEET11, SWEET12, SWEET13, SWEET15 and SWEET16. Expressed in leaves at low levels, mostly in xylem and parenchyma. Highly expressed in the cortex of roots, predominantly in tips and mature regions, especially in tonoplasts. Also accumulates in cotyledons, stems, flowers, and siliques.

It localises to the vacuole membrane. Functionally, acts as a vacuolar hexose transporter. Regulates fructose (Fru) homeostasis in leaves and roots by exporting/importing Fru through the tonoplast regarding metabolic demand. This chain is Bidirectional sugar transporter SWEET17, found in Arabidopsis thaliana (Mouse-ear cress).